The chain runs to 810 residues: MAVGENKEQILNVRIEDEIKTSYLNYAMSVIVSRALPDVRDGLKPVHRRILYSMYEMGLRSDKAFKKAGRIVGDVLGKYHPHGDQSIYDALVRLAQDFSLRYPVIRGQGNFGSIDGDPPAAMRYTEAKMEKITEYIVKDIDKETVNFKSNYDDSLSEPEIMPSSFPFLLVNGSSGIAVGMATNMAPHNLREICDAIVYMLDNENASIFDLLKIVKGPDFPTFGEIVYNDNLIKAYKTGKGSVVIRARYHIEERAEDRNAIIVTEIPYTVNKSALLMKVALLAKEEKLEGLLDIRDESDREGIRIVLEVKRGFDPHVIMNLLYEYTEFKKHFSINNLALVNGIPKQLNLEELLFEFIEHRKNIIERRIEFDLRKAKEKAHVLEGLNIALNNIDEVIKIIKSSKLAKDARERLVSNFGLSEIQANSVLDMRLQKLTALEIFKLEEELNILLSLIKDYEDILLNPVRIINIIREETINLGLKFGDERRTKIIYDEEVLKTSMSDLMQKENIVVMLTKKGFLKRLSQNEYKLQGTGGKGLSSFDLNDGDEIVIALCVNTHDYLFMISNEGKLYLINAYEIKDSSRASKGQNISELINLGDQEEILTIKNSKDLTDDAYLLLTTASGKIARFESTDFKAVKSRGVIVIKLNDKDFVTSAEIVFKDEKVICLSKKGSAFIFNSRDVRLTNRGTQGVCGMKLKEGDLFVKVLSVKENPYLLIVSENGYGKRLNMSKISELKRGATGYTSYKKSDKKAGSVVDAIAVSEDDEILLVSKRSKALRTVAGKVSEQGKDARGIQVLFLDNDSLVSVSKFIK.

One can recognise a Topo IIA-type catalytic domain in the interval 36–502 (LPDVRDGLKP…EVLKTSMSDL (467 aa)). Residue Y124 is the O-(5'-phospho-DNA)-tyrosine intermediate of the active site. The interval 499-810 (MSDLMQKENI…SLVSVSKFIK (312 aa)) is C-terminal domain. A GyrA-box motif is present at residues 529 to 535 (QGTGGKG).

The protein belongs to the type II topoisomerase GyrA/ParC subunit family. Heterotetramer, composed of two GyrA and two GyrB chains. In the heterotetramer, GyrA contains the active site tyrosine that forms a transient covalent intermediate with DNA, while GyrB binds cofactors and catalyzes ATP hydrolysis.

It localises to the cytoplasm. It catalyses the reaction ATP-dependent breakage, passage and rejoining of double-stranded DNA.. Its function is as follows. A type II topoisomerase that negatively supercoils closed circular double-stranded (ds) DNA in an ATP-dependent manner to modulate DNA topology and maintain chromosomes in an underwound state. Negative supercoiling favors strand separation, and DNA replication, transcription, recombination and repair, all of which involve strand separation. Also able to catalyze the interconversion of other topological isomers of dsDNA rings, including catenanes and knotted rings. Type II topoisomerases break and join 2 DNA strands simultaneously in an ATP-dependent manner. This chain is DNA gyrase subunit A, found in Borreliella burgdorferi (strain ATCC 35210 / DSM 4680 / CIP 102532 / B31) (Borrelia burgdorferi).